The chain runs to 2431 residues: MTSGGSASRSGHRGVPMTSRGFDGSRRGSLRRAGARETASEAADGAAPAAGLRASPCSLASPSAAAAVAAIPADMAAVLQQVLERPELNKLPKSTQNKLEKFLAEQQSEIDCLKGRHEKFKVESEQQYFEIEKRLSQSQERLVTETRECQNLRLELEKLNNQVKVLTEKTKELETAQDRNLGIQSQFTRAKEELEAEKRDLIRTNERLSQEVEYLTEDVKRLNEKLKESNTTKGELQLKLDELQASDVAVKYREKRLEQEKELLHNQNSWLNTELKTKTDELLALGREKGNEILELKCNLENKKEEVLRLEEQMNGLKTSNEHLQKHVEDLLTKLKEAKEQQASMEEKFHNELNAHIKLSNLYKSAADDSEAKSNELTRAVDELHKLLKEAGEANKTIQDHLLQVEESKDQMEKEMLEKIGKLEKELENANDLLSATKRKGAILSEEELAAMSPTAAAVAKIVKPGMKLTELYNAYVETQDQLLLEKQENKRINKYLDEIVKEVEAKAPILKRQREEYERAQKAVASLSAKLEQAMKEIQRLQEDTDKANKHSSVLERDNQRMEIQIKDLSQQIRVLLMELEEARGNHVIRDEEVSSADISSSSEVISQHLVSYRNIEELQQQNQRLLFALRELGETREREEQETTSSKIAELQHKLENSLAELEQLRESRQHQMQLVDSIVRQRDMYRILLSQTTGMAIPLQASSLDDISLLSTPKRSSTSQTVSTPAPEPVIDSTEAIEAKAALKQLQEIFENYKKEKIDSEKLQNEQLEKLQEQVTDLRSQNTKISTQLDFASKRYEMLQDNVEGYRREITSLQERNQKLTATTQKQEQIINTMTQDLRGANEKLAVAEVRAENLKKEKEMLKLSEVRLSQQRESLLAEQRGQNLLLTNLQTIQGILERSETETKQRLNSQIEKLEHEISHLKKKLENEVEQRHTLTRNLDVQLLDTKRQLDTEINLHLNTKELLKNAQKDIATLKQHLNNMEAQLASQSTQRTGKGQPGDRDDVDDLKSQLRQAEEQVNDLKERLKTSTSNVEQYRAMVTSLEDSLNKEKQVTEEVHKNIEVRLKESAEFQTQLEKKLMEVEKEKQELQDDKRKAIESMEQQLSELKKTLSTVQNEVQEALQRASTALSNEQQARRDCQEQAKIAVEAQNKYERELMLHAADVEALQAAKEQVSKMTSIRQHLEETTQKAESQLLECKASWEERERVLKDEVSKSVSRCEDLEKQNRLLHDQIEKLSDKVVTSMKDAVQAPLNVSLNEEGKSQEQILEILRFIRREKEIAETRFEVAQVESLRYRQRVELLERELQELQDSLNVEREKVQVTAKTMAQHEELMKKTETMNVVMETNKMLREEKERLEQNLQQMQAKVRKLELDILPLQEANAELSEKSGMLQAEKKLLEEDVKRWKARNQQLINQQKDPDTEEYRKLLSEKEIHTKRIQQLNEEVGRLKAEIARSNASLTNNQNLIQSLREDLSKARTEKEGIQKDLDAKIIDIQEKVKTITQVKKIGRRYKTQFEELKAQQNKAMETSTQSSGDHQEQHISVQEMQELKDTLSQSETKTKSLEGQVENLQKTLSEKETEARSLQEQTVQLQSELSRLRQDLQDKTTEEQLRQQMNEKTWKTLALAKSKITHLSGVKDQLTKEIEELKQRNGALDQQKDELDVRMTALKSQYEGRISRLERELREHQERHLEQRDEPQEPTNKAPEQQRQITLKTTPASGERGIASTSDPPTANIKPTPVVSTPSKVTAAAMAGNKSTPRASIRPMVTPATVTNPTTTPTATVMPTTQVESQEAMQSEGPVEHVPVFGNASGSVRSTSPNVQPSISQPILTVQQQTQATAFVQPTQQSHPQIEPTNQELSPNIVEVVQSSPVERPSTSTAVFGTVSATPSSSLPKRTREEEEDSTMEAGDQVSEDTVEMPLPKKLKMVTPVGTEEEVMAEESTDGEAETQAYNQDSQDSIGEGVTQGDYTPMEDSEETSQSLQIDLGPLQSDQQTTSSQDGQGKGDDVIVIDSDDEDDDEENDGEHEDYEEDEDDDDDEEDDTGMGDEGEDSNEGTGSADGNDGYEADDAEGGDGTDPGTETEESMGGAESHQRAADSQNSGEGNTSAAESSFSQEVAREQQPTSASERQTPQAPQSPRRPPHPLPPRLTIHAPPQELGPPVQRIQMTRRQSVGRGLQLTPGIGGMQQHFFDDEDRTVPSTPTLVVPHRTDGFAEAIHSPQVAGVPRFRFGPPEDMPQTSSSHSDLGQLASQGGLGMYETPLFLAHEEESGGRSVPTTPLQVAAPVTVFTESTTSDASEHASQSVPMVTTSTGTLSTTNETAAGDDGDEVFVEAESEGISSEAGLEIDSQQEEEPVQASDESDLPSTSQDPPSSSSVDTSSSQPKPFRRVRLQTTLRQGVRGRQFNRQRGISHAMGGRGGINRGNIN.

The disordered stretch occupies residues 1-48; that stretch reads MTSGGSASRSGHRGVPMTSRGFDGSRRGSLRRAGARETASEAADGAAP. Positions 77-87 are sufficient for interaction with TPR; the sequence is AVLQQVLERPE. The tract at residues 88–191 is necessary for interaction with HSF1; that stretch reads LNKLPKSTQN…GIQSQFTRAK (104 aa). Residues 98–444 are a coiled coil; the sequence is KLEKFLAEQQ…SATKRKGAIL (347 aa). 3 positions are modified to N6-acetyllysine: Lys326, Lys386, and Lys419. Ser453 is subject to Phosphoserine. A coiled-coil region spans residues 486–678; the sequence is EKQENKRINK…ESRQHQMQLV (193 aa). Lys502, Lys531, and Lys551 each carry N6-acetyllysine. Residues 511-587 are necessary for association to the NPC; that stretch reads LKRQREEYER…LMELEEARGN (77 aa). Residues Ser596, Ser597, and Ser706 each carry the phosphoserine modification. Residues 736–1246 are a coiled coil; sequence STEAIEAKAA…IEKLSDKVVT (511 aa). N6-acetyllysine is present on residues Lys787, Lys797, Lys822, and Lys829. Residues 989-998 are compositionally biased toward polar residues; the sequence is LASQSTQRTG. The tract at residues 989–1011 is disordered; that stretch reads LASQSTQRTGKGQPGDRDDVDDL. Residues 1002-1011 show a composition bias toward basic and acidic residues; sequence PGDRDDVDDL. At Ser1259 the chain carries Phosphoserine. Coiled coils occupy residues 1289-1494 and 1547-1700; these read EVAQ…LDAK and VQEM…QRDE. The necessary for interaction with HSF1 stretch occupies residues 1292–1394; the sequence is QVESLRYRQR…NAELSEKSGM (103 aa). Residues 1689–1701 show a composition bias toward basic and acidic residues; the sequence is EHQERHLEQRDEP. Residues 1689-1744 are disordered; the sequence is EHQERHLEQRDEPQEPTNKAPEQQRQITLKTTPASGERGIASTSDPPTANIKPTPV. Residues 1703–1722 show a composition bias toward polar residues; sequence EPTNKAPEQQRQITLKTTPA. Lys1760 carries the N6-acetyllysine modification. Thr1762 bears the Phosphothreonine mark. Positions 1873-1898 are enriched in polar residues; the sequence is SSPVERPSTSTAVFGTVSATPSSSLP. The segment at 1873–2193 is disordered; that stretch reads SSPVERPSTS…TPGIGGMQQH (321 aa). A sufficient and essential for mediating its nuclear import region spans residues 1882-1937; it reads STAVFGTVSATPSSSLPKRTREEEEDSTMEAGDQVSEDTVEMPLPKKLKMVTPVGT. Over residues 1937 to 1951 the composition is skewed to acidic residues; that stretch reads TEEEVMAEESTDGEA. Residues 1954–1963 show a composition bias toward polar residues; sequence QAYNQDSQDS. Residue Ser1963 is modified to Phosphoserine. Over residues 1994–2005 the composition is skewed to low complexity; the sequence is QSDQQTTSSQDG. 2 stretches are compositionally biased toward acidic residues: residues 2016–2057 and 2067–2088; these read DSDD…EDSN and DGYEADDAEGGDGTDPGTETEE. Residues 2100–2132 show a composition bias toward polar residues; sequence ADSQNSGEGNTSAAESSFSQEVAREQQPTSASE. Phosphoserine is present on residues Ser2102, Ser2105, Ser2116, Ser2118, and Ser2141. Omega-N-methylarginine is present on residues Arg2174 and Arg2179. Thr2184 and Thr2205 each carry phosphothreonine. Phosphoserine is present on Ser2223. Arg2231 carries the omega-N-methylarginine modification. Over residues 2295 to 2312 the composition is skewed to polar residues; it reads ESTTSDASEHASQSVPMV. Residues 2295–2431 form a disordered region; the sequence is ESTTSDASEH…RGGINRGNIN (137 aa). Residues 2313-2325 show a composition bias toward low complexity; it reads TTSTGTLSTTNET. Residues 2327–2340 are compositionally biased toward acidic residues; sequence AGDDGDEVFVEAES. Over residues 2341–2351 the composition is skewed to low complexity; the sequence is EGISSEAGLEI. Acidic residues predominate over residues 2353–2367; the sequence is SQQEEEPVQASDESD. Low complexity predominate over residues 2368–2388; the sequence is LPSTSQDPPSSSSVDTSSSQP. 3 positions are modified to asymmetric dimethylarginine: Arg2411, Arg2413, and Arg2422. The segment covering 2420 to 2431 has biased composition (gly residues); it reads GGRGGINRGNIN.

It belongs to the TPR family. In terms of assembly, homodimer. Part of the nuclear pore complex (NPC). Associates with the XPO1/CRM1-mediated nuclear export complex, the Importin alpha/Importin beta receptor and the dynein 1 complex. Interacts (via C-terminal domain) with the KPNB1; the interaction occurs in a RanGTP-dependent manner. Interacts (via C-terminal region and phosphorylated form) with MAPK1/ERK2 (via phosphorylated form); the interaction requires dimerization of MAPK1/ERK2 and increases following EGF stimulation. Interacts with MAPK3/ERK1; the interaction increases following EGF stimulation. Interacts (via coiled coil region) with NUP153; the interaction is direct. Interacts with HSF1; the interaction increases in a stress-responsive manner and stimulates export of stress-induced HSP70 mRNA. Interacts with huntingtin/HTT; the interaction is inhibited by aggregated huntingtin/HTT forms with expanded polyglutamine stretch. Interacts with MAD1L1 (via N-terminal region), MAD2L1, and TTK; the interactions occurs in a microtubule-independent manner. Interacts (via middle region) with DYNLL1. Interacts with DCTN1, dynein, NUP153 and tubulin. Interacts with MTA1. Interacts with IFI204 (via C-terminal region). Interacts with IFI203. Interacts with ZC3HC1; this interaction mediates ZC3HC1 nuclear envelopes (NE)-association but also required for proper positioning of a substantial amount of TPR at the nuclear basket (NB). Post-translationally, phosphorylated. Phosphorylation occurs on serine and threonine residues (comprised in the C-terminal region) by MAPK1/ERK2 and stabilizes the interaction between these two proteins. As to expression, expressed in the heart, liver, kidney, spleen, lung and skeletal muscles.

It localises to the nucleus. Its subcellular location is the nucleus membrane. The protein resides in the nucleus envelope. The protein localises to the nuclear pore complex. It is found in the cytoplasm. It localises to the cytoskeleton. Its subcellular location is the spindle. The protein resides in the chromosome. The protein localises to the centromere. It is found in the kinetochore. Functionally, component of the nuclear pore complex (NPC), a complex required for the trafficking across the nuclear envelope. Functions as a scaffolding element in the nuclear phase of the NPC essential for normal nucleocytoplasmic transport of proteins and mRNAs, plays a role in the establishment of nuclear-peripheral chromatin compartmentalization in interphase, and in the mitotic spindle checkpoint signaling during mitosis. Involved in the quality control and retention of unspliced mRNAs in the nucleus; in association with NUP153, regulates the nuclear export of unspliced mRNA species bearing constitutive transport element (CTE) in a NXF1- and KHDRBS1-independent manner. Negatively regulates both the association of CTE-containing mRNA with large polyribosomes and translation initiation. Does not play any role in Rev response element (RRE)-mediated export of unspliced mRNAs. Implicated in nuclear export of mRNAs transcribed from heat shock gene promoters; associates both with chromatin in the HSP70 promoter and with mRNAs transcribed from this promoter under stress-induced conditions. Plays a limited role in the regulation of nuclear protein export. Modulates the nucleocytoplasmic transport of activated MAPK1/ERK2 and huntingtin/HTT and may serve as a docking site for the XPO1/CRM1-mediated nuclear export complex. Also plays a role as a structural and functional element of the perinuclear chromatin distribution; involved in the formation and/or maintenance of NPC-associated perinuclear heterochromatin exclusion zones (HEZs). Finally, acts as a spatial regulator of the spindle-assembly checkpoint (SAC) response ensuring a timely and effective recruitment of spindle checkpoint proteins like MAD1L1 and MAD2L1 to unattached kinetochore during the metaphase-anaphase transition before chromosome congression. Its N-terminus is involved in activation of oncogenic kinases. This chain is Nucleoprotein TPR, found in Mus musculus (Mouse).